Here is a 105-residue protein sequence, read N- to C-terminus: Small ribosomal subunit protein uS10 (105 aa).

This sequence belongs to the universal ribosomal protein uS10 family. Part of the 30S ribosomal subunit.

Involved in the binding of tRNA to the ribosomes. The protein is Small ribosomal subunit protein uS10 of Cyanothece sp. (strain PCC 7425 / ATCC 29141).